Here is a 264-residue protein sequence, read N- to C-terminus: Thymidylate synthase (264 aa).

Arg-21 contacts dUMP. Position 51 (His-51) interacts with (6R)-5,10-methylene-5,6,7,8-tetrahydrofolate. Position 126-127 (126-127) interacts with dUMP; the sequence is RR. The active-site Nucleophile is the Cys-146. DUMP contacts are provided by residues 166-169, Asn-177, and 207-209; these read RSAD and HLY. Asp-169 provides a ligand contact to (6R)-5,10-methylene-5,6,7,8-tetrahydrofolate. (6R)-5,10-methylene-5,6,7,8-tetrahydrofolate is bound at residue Ser-263.

Belongs to the thymidylate synthase family. Bacterial-type ThyA subfamily. Homodimer.

Its subcellular location is the cytoplasm. The enzyme catalyses dUMP + (6R)-5,10-methylene-5,6,7,8-tetrahydrofolate = 7,8-dihydrofolate + dTMP. It functions in the pathway pyrimidine metabolism; dTTP biosynthesis. Catalyzes the reductive methylation of 2'-deoxyuridine-5'-monophosphate (dUMP) to 2'-deoxythymidine-5'-monophosphate (dTMP) while utilizing 5,10-methylenetetrahydrofolate (mTHF) as the methyl donor and reductant in the reaction, yielding dihydrofolate (DHF) as a by-product. This enzymatic reaction provides an intracellular de novo source of dTMP, an essential precursor for DNA biosynthesis. The sequence is that of Thymidylate synthase from Shouchella clausii (strain KSM-K16) (Alkalihalobacillus clausii).